The chain runs to 193 residues: Xanthine phosphoribosyltransferase (193 aa).

2 residues coordinate xanthine: L20 and N27. Position 127 to 131 (127 to 131 (AYGNA)) interacts with 5-phospho-alpha-D-ribose 1-diphosphate. Residue K155 coordinates xanthine.

The protein belongs to the purine/pyrimidine phosphoribosyltransferase family. Xpt subfamily. Homodimer.

It is found in the cytoplasm. It catalyses the reaction XMP + diphosphate = xanthine + 5-phospho-alpha-D-ribose 1-diphosphate. It participates in purine metabolism; XMP biosynthesis via salvage pathway; XMP from xanthine: step 1/1. Converts the preformed base xanthine, a product of nucleic acid breakdown, to xanthosine 5'-monophosphate (XMP), so it can be reused for RNA or DNA synthesis. The protein is Xanthine phosphoribosyltransferase of Porphyromonas gingivalis (strain ATCC BAA-308 / W83).